A 272-amino-acid polypeptide reads, in one-letter code: MRNIFIVLIFLFLSNCSEVKAQDKKYEGKQIIVQEPLQNNKTPQETNQESINSATKSVVHNNDNNQTEEVLIHDSREQKKPEIRPTKVTFKIDDNDMVLGNKKSNVIVVEYFSPTCPHCAYYHQTIFPELKKKYIDTNKIAYVIREFIATKQDLDAAILARCKGDINSFIQFHNIILQQQDKWAYSNKYRELLTDIGQLGGIPPEEYKQCLNSDKITATLIANTNLVAKAPKFIGTPSFFVNGVQTENYSIDNISKAVDKALDDETKKQINF.

The first 21 residues, 1 to 21 (MRNIFIVLIFLFLSNCSEVKA), serve as a signal peptide directing secretion. The 190-residue stretch at 74–263 (DSREQKKPEI…ISKAVDKALD (190 aa)) folds into the Thioredoxin domain. Cys116 and Cys119 form a disulfide bridge.

It belongs to the thioredoxin family. DsbA subfamily.

The protein resides in the periplasm. In terms of biological role, may be required for disulfide bond formation in some proteins. In Rickettsia prowazekii (strain Madrid E), this protein is Putative protein-disulfide oxidoreductase RP025.